A 397-amino-acid chain; its full sequence is Ribosomal RNA large subunit methyltransferase I (397 aa).

In terms of domain architecture, PUA spans 2–81; it reads STTVYLQKDR…EQIDTEFFVR (80 aa).

It belongs to the methyltransferase superfamily. RlmI family.

It localises to the cytoplasm. It catalyses the reaction cytidine(1962) in 23S rRNA + S-adenosyl-L-methionine = 5-methylcytidine(1962) in 23S rRNA + S-adenosyl-L-homocysteine + H(+). Its function is as follows. Specifically methylates the cytosine at position 1962 (m5C1962) of 23S rRNA. This is Ribosomal RNA large subunit methyltransferase I from Tolumonas auensis (strain DSM 9187 / NBRC 110442 / TA 4).